The sequence spans 286 residues: Pantothenate synthetase (286 aa).

Residue 31-38 (MGALHDGH) participates in ATP binding. His-38 functions as the Proton donor in the catalytic mechanism. A (R)-pantoate-binding site is contributed by Gln-62. Beta-alanine is bound at residue Gln-62. Residue 148–151 (GKKD) participates in ATP binding. Gln-154 lines the (R)-pantoate pocket. ATP is bound by residues Val-177 and 185-188 (KSSR).

It belongs to the pantothenate synthetase family. In terms of assembly, homodimer.

It localises to the cytoplasm. The enzyme catalyses (R)-pantoate + beta-alanine + ATP = (R)-pantothenate + AMP + diphosphate + H(+). Its pathway is cofactor biosynthesis; (R)-pantothenate biosynthesis; (R)-pantothenate from (R)-pantoate and beta-alanine: step 1/1. Its function is as follows. Catalyzes the condensation of pantoate with beta-alanine in an ATP-dependent reaction via a pantoyl-adenylate intermediate. The protein is Pantothenate synthetase of Staphylococcus epidermidis (strain ATCC 35984 / DSM 28319 / BCRC 17069 / CCUG 31568 / BM 3577 / RP62A).